The primary structure comprises 245 residues: Fibroblast growth factor 13 (245 aa).

Residues 1 to 36 (MAAAIASSLIRQKRQAREREKSNACKCVSSPSKGKT) are disordered. Positions 1–62 (MAAAIASSLI…GSKKRRRRRP (62 aa)) are mediates targeting to the nucleus. Positions 67-201 (KGIVTKLYSR…AHFLPKPLKV (135 aa)) are mediates interaction with sodium channels. Positions 157–164 (SMIYRQQQ) are tubulin-binding domain necessary and sufficient for tubulin-binding. Residue Ser208 is modified to Phosphoserine. The tract at residues 213–245 (TEFSRSGSGTPTKSRSVSGVLNGGKSMSHNEST) is disordered. Residues 215–245 (FSRSGSGTPTKSRSVSGVLNGGKSMSHNEST) are compositionally biased toward polar residues.

It belongs to the heparin-binding growth factors family. In terms of assembly, interacts with SCN8A; regulates SCN8A activity. Interacts with SCN1A; may regulate SCN1A activity. Interacts with SCN5A; the interaction is direct and may regulate SNC5A density at membranes and function. May also interact with SCN2A and SCN11A. Interacts with MAPK8IP2; may regulate the MAPK8IP2 scaffolding activity. Post-translationally, may be phosphorylated. As to expression, detected in brain, eye and heart. In brain, the different isoforms display different patterns of expression. Expressed in brain and heart (at protein level). Isoform 3 is highly expressed in cardiac myocytes while isoform 1 is the most abundant in brain.

It is found in the cell projection. The protein resides in the filopodium. It localises to the growth cone. Its subcellular location is the dendrite. The protein localises to the cell membrane. It is found in the sarcolemma. The protein resides in the cytoplasm. It localises to the nucleus. In terms of biological role, microtubule-binding protein which directly binds tubulin and is involved in both polymerization and stabilization of microtubules. Through its action on microtubules, may participate to the refinement of axons by negatively regulating axonal and leading processes branching. Plays a crucial role in neuron polarization and migration in the cerebral cortex and the hippocampus. Regulates voltage-gated sodium channel transport and function. May also play a role in MAPK signaling. Required for the development of axonal initial segment-targeting inhibitory GABAergic synapses made by chandelier neurons. Seems not to be involved in neuroblast polarization and migration but regulates axon branching. The polypeptide is Fibroblast growth factor 13 (Mus musculus (Mouse)).